Consider the following 84-residue polypeptide: Small nuclear ribonucleoprotein E (84 aa).

Positions 13–84 constitute a Sm domain; the sequence is INFIFKLLQQ…GDNITLIQAI (72 aa).

It belongs to the snRNP Sm proteins family. As to quaternary structure, component of the Sm core complex, present in spliceosomal snRNP U1, U2, U4/U6 and U5. The core complex contains smb1, smd1, smd2, smd3, sme1, smf1 and smg1 (Sm proteins B, D1, D2, D3, E, F and G, respectively), and is probably a heptameric ring structure.

The protein resides in the cytoplasm. The protein localises to the nucleus. Its function is as follows. Involved in pre-mRNA splicing. Binds and is required for the stability of snRNA U1, U2, U4 and U5 which contain a highly conserved structural motif called the Sm binding site. Involved in cap modification. The sequence is that of Small nuclear ribonucleoprotein E from Schizosaccharomyces pombe (strain 972 / ATCC 24843) (Fission yeast).